We begin with the raw amino-acid sequence, 283 residues long: Elongation factor Ts (283 aa).

The segment at 79–82 is involved in Mg(2+) ion dislocation from EF-Tu; sequence TDFV.

This sequence belongs to the EF-Ts family.

Its subcellular location is the cytoplasm. In terms of biological role, associates with the EF-Tu.GDP complex and induces the exchange of GDP to GTP. It remains bound to the aminoacyl-tRNA.EF-Tu.GTP complex up to the GTP hydrolysis stage on the ribosome. The chain is Elongation factor Ts from Shewanella putrefaciens (strain CN-32 / ATCC BAA-453).